A 186-amino-acid chain; its full sequence is uncharacterized protein (186 aa).

One can recognise a Macro domain in the interval 1-181 (MVSFSYKGNL…TFVSLASDFL (181 aa)).

Belongs to the MacroD-type family.

This is an uncharacterized protein from Thermoplasma volcanium (strain ATCC 51530 / DSM 4299 / JCM 9571 / NBRC 15438 / GSS1).